The chain runs to 387 residues: uncharacterized protein (387 aa).

A helical transmembrane segment spans residues 5–25; sequence FVLFSFPFLLLSSMLIFYQTT.

The protein belongs to the LicD transferase family.

The protein resides in the membrane. This is an uncharacterized protein from Caenorhabditis elegans.